Here is a 423-residue protein sequence, read N- to C-terminus: Glutamate-1-semialdehyde 2,1-aminomutase (423 aa).

Lysine 262 bears the N6-(pyridoxal phosphate)lysine mark.

This sequence belongs to the class-III pyridoxal-phosphate-dependent aminotransferase family. HemL subfamily. Homodimer. The cofactor is pyridoxal 5'-phosphate.

The protein resides in the cytoplasm. It catalyses the reaction (S)-4-amino-5-oxopentanoate = 5-aminolevulinate. The protein operates within porphyrin-containing compound metabolism; protoporphyrin-IX biosynthesis; 5-aminolevulinate from L-glutamyl-tRNA(Glu): step 2/2. The polypeptide is Glutamate-1-semialdehyde 2,1-aminomutase (Saccharophagus degradans (strain 2-40 / ATCC 43961 / DSM 17024)).